Reading from the N-terminus, the 170-residue chain is dCTP pyrophosphatase 1 (170 aa).

The disordered stretch occupies residues 1–25 (MSQAGTGVCGNGGQEDSAAAGPFSF). S2 carries the post-translational modification N-acetylserine. S2 is modified (phosphoserine). Residues H38 and 47–51 (WEQFH) each bind substrate. The Mg(2+) site is built by E63 and E66. W73 contacts substrate. E95 and D98 together coordinate Mg(2+). Y102 serves as a coordination point for substrate. Positions 149–170 (LSENEAVGSGDPASELGNQAST) are disordered.

In terms of assembly, homotetramer. Mg(2+) is required as a cofactor.

Its subcellular location is the cytoplasm. The protein localises to the cytosol. The catalysed reaction is dCTP + H2O = dCMP + diphosphate + H(+). In terms of biological role, hydrolyzes deoxynucleoside triphosphates (dNTPs) to the corresponding nucleoside monophosphates. Has a strong preference for dCTP and its analogs including 5-iodo-dCTP and 5-methyl-dCTP for which it may even have a higher efficiency. May protect DNA or RNA against the incorporation of these genotoxic nucleotide analogs through their catabolism. This Rattus norvegicus (Rat) protein is dCTP pyrophosphatase 1.